A 504-amino-acid chain; its full sequence is ATP synthase subunit alpha, chloroplastic (504 aa).

170–177 (GDRQTGKT) serves as a coordination point for ATP.

Belongs to the ATPase alpha/beta chains family. F-type ATPases have 2 components, CF(1) - the catalytic core - and CF(0) - the membrane proton channel. CF(1) has five subunits: alpha(3), beta(3), gamma(1), delta(1), epsilon(1). CF(0) has four main subunits: a, b, b' and c.

The protein localises to the plastid. The protein resides in the chloroplast thylakoid membrane. It catalyses the reaction ATP + H2O + 4 H(+)(in) = ADP + phosphate + 5 H(+)(out). Functionally, produces ATP from ADP in the presence of a proton gradient across the membrane. The alpha chain is a regulatory subunit. The chain is ATP synthase subunit alpha, chloroplastic from Jasminum nudiflorum (Winter jasmine).